The primary structure comprises 213 residues: Insulin-like peptide INSL6 (213 aa).

The signal sequence occupies residues 1–20 (MPRLLRLSLLWLGLLLVRFS). 3 disulfides stabilise this stretch: cysteine 33–cysteine 179, cysteine 45–cysteine 192, and cysteine 178–cysteine 183. The propeptide at 55–168 (FEEETPFSRL…SNLFWGHHPQ (114 aa)) is connecting peptide. Positions 201 to 213 (LKEKRSSLVTKIY) are excised as a propeptide.

Belongs to the insulin family. Testis specific.

Its subcellular location is the secreted. Functionally, may have a role in sperm development and fertilization. This Homo sapiens (Human) protein is Insulin-like peptide INSL6 (INSL6).